We begin with the raw amino-acid sequence, 76 residues long: Acyl carrier protein (76 aa).

The region spanning 1-76 (MSLEEKVKNI…DVIEYIKAHT (76 aa)) is the Carrier domain. O-(pantetheine 4'-phosphoryl)serine is present on S36.

Belongs to the acyl carrier protein (ACP) family. In terms of processing, 4'-phosphopantetheine is transferred from CoA to a specific serine of apo-ACP by AcpS. This modification is essential for activity because fatty acids are bound in thioester linkage to the sulfhydryl of the prosthetic group.

It is found in the cytoplasm. The protein operates within lipid metabolism; fatty acid biosynthesis. Functionally, carrier of the growing fatty acid chain in fatty acid biosynthesis. The polypeptide is Acyl carrier protein (Desulfatibacillum aliphaticivorans).